A 327-amino-acid chain; its full sequence is Ribonucleoside-diphosphate reductase small chain (327 aa).

Fe cation-binding residues include Asp-70, Glu-101, and His-104. The active site involves Tyr-108. Fe cation contacts are provided by Glu-164, Glu-198, and His-201.

Belongs to the ribonucleoside diphosphate reductase small chain family. In terms of assembly, heterotetramer composed of a homodimer of the large subunit (R1) and a homodimer of the small subunit (R2). Larger multisubunit protein complex are also active, composed of (R1)n(R2)n. Fe cation is required as a cofactor.

It carries out the reaction a 2'-deoxyribonucleoside 5'-diphosphate + [thioredoxin]-disulfide + H2O = a ribonucleoside 5'-diphosphate + [thioredoxin]-dithiol. In terms of biological role, ribonucleoside-diphosphate reductase holoenzyme provides the precursors necessary for viral DNA synthesis. Allows virus growth in non-dividing cells. Catalyzes the biosynthesis of deoxyribonucleotides from the corresponding ribonucleotides. The protein is Ribonucleoside-diphosphate reductase small chain of Ornithodoros (relapsing fever ticks).